The chain runs to 534 residues: CTP synthase (534 aa).

The amidoligase domain stretch occupies residues 1–265 (MKYIIVTGGV…TTQLMKHLQL (265 aa)). CTP is bound at residue Ser-12. Ser-12 lines the UTP pocket. An ATP-binding site is contributed by 13-18 (GLGKGI). Residue Tyr-53 participates in L-glutamine binding. Asp-70 serves as a coordination point for ATP. Residues Asp-70 and Glu-140 each coordinate Mg(2+). CTP-binding positions include 147–149 (DIE), 186–191 (KTKPSQ), and Lys-222. UTP is bound by residues 186-191 (KTKPSQ) and Lys-222. The Glutamine amidotransferase type-1 domain maps to 289 to 530 (KLAIVGKYTN…VAAMCKYRKE (242 aa)). Position 352 (Gly-352) interacts with L-glutamine. The active-site Nucleophile; for glutamine hydrolysis is Cys-379. Residues 380–383 (LGMQ), Glu-403, and Arg-460 contribute to the L-glutamine site. Catalysis depends on residues His-503 and Glu-505.

Belongs to the CTP synthase family. In terms of assembly, homotetramer.

The enzyme catalyses UTP + L-glutamine + ATP + H2O = CTP + L-glutamate + ADP + phosphate + 2 H(+). It carries out the reaction L-glutamine + H2O = L-glutamate + NH4(+). It catalyses the reaction UTP + NH4(+) + ATP = CTP + ADP + phosphate + 2 H(+). The protein operates within pyrimidine metabolism; CTP biosynthesis via de novo pathway; CTP from UDP: step 2/2. Allosterically activated by GTP, when glutamine is the substrate; GTP has no effect on the reaction when ammonia is the substrate. The allosteric effector GTP functions by stabilizing the protein conformation that binds the tetrahedral intermediate(s) formed during glutamine hydrolysis. Inhibited by the product CTP, via allosteric rather than competitive inhibition. In terms of biological role, catalyzes the ATP-dependent amination of UTP to CTP with either L-glutamine or ammonia as the source of nitrogen. Regulates intracellular CTP levels through interactions with the four ribonucleotide triphosphates. The sequence is that of CTP synthase from Methanosarcina barkeri (strain Fusaro / DSM 804).